A 332-amino-acid chain; its full sequence is DGAT1/2-independent enzyme synthesizing storage lipids (332 aa).

At Met-1–Glu-10 the chain is on the lumenal side. N-linked (GlcNAc...) asparagine glycosylation is present at Asn-5. Residues Gly-11–Val-31 traverse the membrane as a helical segment. Topologically, residues Glu-32–Ser-45 are cytoplasmic. Residues Trp-46–Phe-66 form a helical membrane-spanning segment. Residues Asn-67 to Asp-332 lie on the Lumenal side of the membrane. His-132 is an active-site residue. N-linked (GlcNAc...) asparagine glycosylation is present at Asn-289.

It belongs to the diacylglycerol acyltransferase family. Highly divergent.

It is found in the endoplasmic reticulum membrane. The catalysed reaction is a 1,2-diacylglycerol + a 1,2-diacyl-sn-glycero-3-phosphocholine = a triacylglycerol + a 1-acyl-sn-glycero-3-phosphocholine. It carries out the reaction a 1-O-alkyl-2-acyl-sn-glycero-3-phosphocholine + a 1,2-diacylglycerol = a 1-O-alkyl-sn-glycero-3-phosphocholine + a triacylglycerol. The enzyme catalyses a 2-acylglycerol + an acyl-CoA = a 1,2-diacylglycerol + CoA. It catalyses the reaction an acyl-CoA + a 1,2-diacyl-sn-glycerol = a triacyl-sn-glycerol + CoA. The catalysed reaction is 2-(9Z-octadecenoyl)-glycerol + (9Z)-octadecenoyl-CoA = 1,2-di-(9Z-octadecenoyl)-glycerol + CoA. It carries out the reaction 1,2-di-(9Z-octadecenoyl)-sn-glycerol + (9Z)-octadecenoyl-CoA = 1,2,3-tri-(9Z-octadecenoyl)-glycerol + CoA. Functionally, catalytic subunit of the alternative triglyceride biosynthesis pathway, which mediates formation of triacylglycerol from diacylglycerol and membrane phospholipids. Synthesizes triacylglycerol at the expense of membrane phospholipids, such as phosphatidylcholine (PC) and its ether-linked form (ePC), thereby altering the composition of membranes. The alternative triglyceride biosynthesis pathway is probably required to provide the energy required for rapid growth when fuel sources are limiting. It maintains mitochondrial function during periods of extracellular lipid starvation. Can also use acyl-CoA as donor: acts as a acyl-CoA:monoacylglycerol acyltransferase (MGAT), but also shows acyl-CoA:diacylglycerol acyltransferase (DGAT) activity. This is DGAT1/2-independent enzyme synthesizing storage lipids (TMEM68) from Gallus gallus (Chicken).